A 955-amino-acid polypeptide reads, in one-letter code: Translation initiation factor IF-2 (955 aa).

Residues 49–352 (AFSQSSESTE…QAPSFGGVKI (304 aa)) are disordered. Over residues 77 to 88 (PQQQTKASAPSA) the composition is skewed to low complexity. Composition is skewed to pro residues over residues 95 to 121 (PAVPKPGPGLKPGPRPVPKPGPRPGPR), 149 to 159 (RPVPKPGPRPG), 188 to 202 (RPGPRPHPGMMPPRP), and 209 to 223 (PPRPQAPRPQAPRPG). A compositionally biased stretch (gly residues) spans 225–235 (GTAGGRPGSSA). The segment covering 238-264 (PPRPVPRPGPRPSPMNMPASRPTPPGG) has biased composition (pro residues). The span at 273-322 (SGGGRGRGGGGGAGPRGGGAGGGAPRTGFGGRPGGGRGRGGTAGAFGRPG) shows a compositional bias: gly residues. Basic residues predominate over residues 326 to 335 (SRSRKSKKQR). Positions 448–620 (PRAPVVTVMG…IILTADAELD (173 aa)) constitute a tr-type G domain. The tract at residues 457–464 (GHVDHGKT) is G1. 457-464 (GHVDHGKT) is a GTP binding site. The interval 482-486 (GITQH) is G2. The tract at residues 507-510 (DTPG) is G3. Residues 507–511 (DTPGH) and 561–564 (NKID) contribute to the GTP site. The interval 561–564 (NKID) is G4. Positions 597–599 (SAK) are G5.

Belongs to the TRAFAC class translation factor GTPase superfamily. Classic translation factor GTPase family. IF-2 subfamily.

It localises to the cytoplasm. Its function is as follows. One of the essential components for the initiation of protein synthesis. Protects formylmethionyl-tRNA from spontaneous hydrolysis and promotes its binding to the 30S ribosomal subunits. Also involved in the hydrolysis of GTP during the formation of the 70S ribosomal complex. The sequence is that of Translation initiation factor IF-2 from Thermobifida fusca (strain YX).